The primary structure comprises 328 residues: MDATLLLNVEGIKKTILHGGTGDLPNFITGARVTFHFRTMKCDEERTVIDDSKQVGHPMHIIIGNMFKLEVWEILLTSMRVSEVAEFWCDTIHTGVYPILSRSLRQMAEGKDPTEWHVHTCGLANMFAYHTLGYEDLDELQKEPQPLIFIIELLQVEAPSQYQRETWNLNNQEKMQAVPILHGEGNRLFKLGRYEEASNKYQEAIVCLRNLQTKEKPWEVQWLKLEKMINTLILNYCQCLLKKEEYYEVLEHTSDILRHHPGIVKAYYVRARAHAEVWNEAEAKADLEKVLELEPSMRKAVQRELRLLENRLEEKREEERLRCRNMLG.

Positions 53-145 (KQVGHPMHII…DLDELQKEPQ (93 aa)) constitute a PPIase FKBP-type domain. TPR repeat units lie at residues 178 to 211 (VPILHGEGNRLFKLGRYEEASNKYQEAIVCLRNL), 230 to 263 (NTLILNYCQCLLKKEEYYEVLEHTSDILRHHPGI), and 264 to 297 (VKAYYVRARAHAEVWNEAEAKADLEKVLELEPSM).

In terms of assembly, directly interacts with NUB1.

It is found in the cytoplasm. The protein localises to the nucleus. In terms of biological role, may be important in protein trafficking and/or protein folding and stabilization. The sequence is that of Aryl-hydrocarbon-interacting protein-like 1 (AIPL1) from Bos taurus (Bovine).